Consider the following 71-residue polypeptide: UPF0337 protein PPA1427 (71 aa).

Residues 20 to 46 (EKIGGLTDDSDLKSAGADQKASGKVAQ) form a disordered region.

The protein belongs to the UPF0337 (CsbD) family.

This chain is UPF0337 protein PPA1427, found in Cutibacterium acnes (strain DSM 16379 / KPA171202) (Propionibacterium acnes).